Consider the following 120-residue polypeptide: Peptidyl-tRNA hydrolase (120 aa).

Belongs to the PTH2 family.

It is found in the cytoplasm. The enzyme catalyses an N-acyl-L-alpha-aminoacyl-tRNA + H2O = an N-acyl-L-amino acid + a tRNA + H(+). Its function is as follows. The natural substrate for this enzyme may be peptidyl-tRNAs which drop off the ribosome during protein synthesis. The protein is Peptidyl-tRNA hydrolase of Sulfolobus acidocaldarius (strain ATCC 33909 / DSM 639 / JCM 8929 / NBRC 15157 / NCIMB 11770).